The chain runs to 631 residues: Transforming acidic coiled-coil-containing protein 3 (631 aa).

Ser-2 bears the N-acetylserine mark. The residue at position 39 (Ser-39) is a Phosphoserine. Residues 42-59 (ENVPPQSQAKATNVTFQT) are compositionally biased toward polar residues. A disordered region spans residues 42 to 70 (ENVPPQSQAKATNVTFQTPPRDPQTHRIL). Ser-71 bears the Phosphoserine mark. 2 necessary but not sufficient for spindle localization regions span residues 311-366 (EESF…PMPV) and 384-631 (KPTE…MEKI). Ser-347 bears the Phosphoserine; by AURKA mark. Residues 363–385 (PMPVAPITNSTQDTEEESGSGKP) are disordered. Residues 431–630 (QKDLDAVVNV…CDDLISKMEK (200 aa)) are a coiled coil.

This sequence belongs to the TACC family. As to quaternary structure, interacts with GCN5L2 and PCAF. The coiled coil C-terminal region interacts with AH receptor nuclear translocator protein (ARNT) and ARNT2. Interacts with CCDC100/CEP120. Interacts with CKAP5 independently of clathrin. Interacts with CKAP5 and clathrin forming the TACC3/ch-TOG/clathrin complex located at spindle inter-microtubules bridges; TACC3 (phosphorylated at Ser-347 by AURKA) and CLTC are proposed to form a composite microtubule interaction surface. Embryonically expressed.

It localises to the cytoplasm. It is found in the cytoskeleton. The protein localises to the microtubule organizing center. The protein resides in the centrosome. Its subcellular location is the spindle pole. Its function is as follows. Plays a role in the microtubule-dependent coupling of the nucleus and the centrosome. Involved in the processes that regulate centrosome-mediated interkinetic nuclear migration (INM) of neural progenitors. Acts as a component of the TACC3/ch-TOG/clathrin complex proposed to contribute to stabilization of kinetochore fibers of the mitotic spindle by acting as inter-microtubule bridge. The TACC3/ch-TOG/clathrin complex is required for the maintenance of kinetochore fiber tension. May be involved in the control of cell growth and differentiation. May have a role in embryonic development. This is Transforming acidic coiled-coil-containing protein 3 (Tacc3) from Mus musculus (Mouse).